Here is a 397-residue protein sequence, read N- to C-terminus: Acetyl-CoA acetyltransferase, cytosolic (397 aa).

The residue at position 1 (Met-1) is an N-acetylmethionine. The Acyl-thioester intermediate role is filled by Cys-92. Lys-200 bears the N6-acetyllysine mark. 2 residues coordinate CoA: Arg-223 and Ser-226. N6-acetyllysine occurs at positions 233 and 235. A CoA-binding site is contributed by Ser-252. The active-site Proton donor/acceptor is Cys-383.

This sequence belongs to the thiolase-like superfamily. Thiolase family. In terms of assembly, homotetramer.

Its subcellular location is the cytoplasm. It is found in the cytosol. It catalyses the reaction 2 acetyl-CoA = acetoacetyl-CoA + CoA. It participates in lipid metabolism; fatty acid metabolism. Involved in the biosynthetic pathway of cholesterol. This Homo sapiens (Human) protein is Acetyl-CoA acetyltransferase, cytosolic (ACAT2).